We begin with the raw amino-acid sequence, 341 residues long: Heme A synthase (341 aa).

Helical transmembrane passes span 7–27 (VTVWLGVCCSMTLLMVVIGGI), 92–112 (LFGRALGAVFCLPIPYFAITK), 118–138 (MVAKLLMVALLGGMQGAMGWF), 159–179 (LFLTILLFSILWHSFLRCAGV), 190–210 (FFTAAAVVGLTVLQMVLGALV), 253–273 (FLHRLVAVLIVVCAAPLPFWL), 280–300 (LFLACVALQFLLGVATLVSVV), and 302–322 (IFLAAMHQVFGFVTLAAGVHM). Histidine 255 provides a ligand contact to heme. Histidine 308 contributes to the heme binding site.

This sequence belongs to the COX15/CtaA family. Type 2 subfamily. In terms of assembly, interacts with CtaB. Heme b serves as cofactor.

It localises to the cell membrane. It carries out the reaction Fe(II)-heme o + 2 A + H2O = Fe(II)-heme a + 2 AH2. Its pathway is porphyrin-containing compound metabolism; heme A biosynthesis; heme A from heme O: step 1/1. In terms of biological role, catalyzes the conversion of heme O to heme A by two successive hydroxylations of the methyl group at C8. The first hydroxylation forms heme I, the second hydroxylation results in an unstable dihydroxymethyl group, which spontaneously dehydrates, resulting in the formyl group of heme A. The protein is Heme A synthase of Anaplasma marginale (strain Florida).